Consider the following 126-residue polypeptide: Protein K7 (126 aa).

A helical membrane pass occupies residues 24–44 (LPLHLWILCSLLAFLPLLVFI).

In terms of assembly, interacts with host CAMLG; this interaction allows efficient apoptosis inhibition. Additionally, interacts with vGPCR/ORF74 and induces its proteasomeal degradation.

The protein localises to the host membrane. Its subcellular location is the host mitochondrion. Its function is as follows. Plays a role in the inhibition of host apoptosis to allow completion of the viral lytic replication and may thus favor the maintenance of persistent infection in infected host. This is Protein K7 (K7) from Homo sapiens (Human).